Consider the following 372-residue polypeptide: MKIFFLFIILLGIIQLSNSSSCNIDIAGDSFDLTPLKKIDGYHKVISDYGDIVYFNFCNTTIDTPCGNSALAYFFDGSTGECHSLGVQEFYSLNSYEEKKTLLINIRGGDIAYDSMVKMLEMFIAFTCDESDDTSEPSLINTMEYGYASVIWTTKYSCAIKTPNVEKKLITNENQNNNNFQFENNEILNEAQSNAFEISNKNEDLNNNNNNNNNNNNNNNNNNNNNNNNNKINSGISFLQRLNQMSQTINNRNEYQQFEEQQNEMQENRAEIVQFNDDIKLIDLEQKQPFYNDDQLMSQTNDDIEFEQDQTNFDTVNDDEIANQINDFMNNFEKTQNLDGDYINQEKIIPNIIMEDTKPNDLTQNFEIENEF.

The signal sequence occupies residues M1 to S19. N18 is a glycosylation site (N-linked (GlcNAc...) asparagine). The 141-residue stretch at S20 to I160 folds into the MRH domain. A disulfide bridge connects residues C22 and C58. N-linked (GlcNAc...) asparagine glycosylation is present at N59. Residues C128 and C158 are joined by a disulfide bond. Residues N185–I282 adopt a coiled-coil conformation. Residues K201–N233 form a disordered region. Over residues N206–N230 the composition is skewed to low complexity.

It localises to the secreted. This is an uncharacterized protein from Dictyostelium discoideum (Social amoeba).